Reading from the N-terminus, the 438-residue chain is Transposon Ty2-LR1 Gag polyprotein (438 aa).

3 stretches are compositionally biased toward polar residues: residues methionine 1 to histidine 11, alanine 19 to asparagine 39, and lysine 49 to threonine 60. Disordered stretches follow at residues methionine 1–glutamine 86, lysine 364–histidine 397, and serine 419–isoleucine 438. An RNA-binding region spans residues glutamate 295 to histidine 397. Positions threonine 369–arginine 381 are enriched in low complexity.

In terms of assembly, homotrimer.

The protein resides in the cytoplasm. Its function is as follows. Capsid protein (CA) is the structural component of the virus-like particle (VLP), forming the shell that encapsulates the retrotransposons dimeric RNA genome. The particles are assembled from trimer-clustered units and there are holes in the capsid shells that allow for the diffusion of macromolecules. CA also has nucleocapsid-like chaperone activity, promoting primer tRNA(i)-Met annealing to the multipartite primer-binding site (PBS), dimerization of Ty2 RNA and initiation of reverse transcription. In Saccharomyces cerevisiae (strain ATCC 204508 / S288c) (Baker's yeast), this protein is Transposon Ty2-LR1 Gag polyprotein (TY2A-LR1).